Consider the following 589-residue polypeptide: (E)-beta-ocimene synthase, chloroplastic (589 aa).

A chloroplast-targeting transit peptide spans 1–25; sequence MAAHNLCFNSAFVCNVHHQKTQHFP. Arg302, Asp339, Asp343, Arg480, and Asn483 together coordinate (2E,6E)-farnesyl diphosphate. The Mg(2+) site is built by Asp339 and Asp343. The short motif at 339–343 is the DDXXD motif element; sequence DDIYD. Asn483, Thr487, and Glu491 together coordinate Mg(2+).

This sequence belongs to the terpene synthase family. Tpsb subfamily. Mg(2+) serves as cofactor. It depends on Mn(2+) as a cofactor. In terms of tissue distribution, expressed exclusively in flowers.

It localises to the plastid. The protein localises to the chloroplast. It carries out the reaction (2E,6E)-farnesyl diphosphate = (3E,6E)-alpha-farnesene + diphosphate. It participates in secondary metabolite biosynthesis; terpenoid biosynthesis. In terms of biological role, predominantly involved in monoterpene (C10) biosynthesis. Using GPP as substrate, the major product is (E)-beta-ocimene with minor amounts of (Z)-beta-ocimene and myrcene. Using FPP as substrate, could also be able to synthesize in vitro sesquiterpenes (C15) with (E,E)-alpha-farnesene as the major product and with (Z,E)-alpha-farnesene and (E,E)-beta-farnesene as minor products. This is (E)-beta-ocimene synthase, chloroplastic (TPS02) from Arabidopsis thaliana (Mouse-ear cress).